Reading from the N-terminus, the 475-residue chain is Stromelysin-1 (475 aa).

The first 17 residues, 1 to 17 (MKGLPVLLWLCTAVCSS), serve as a signal peptide directing secretion. Positions 18–97 (YPLHGSEEDA…PRCGVPDVGG (80 aa)) are cleaved as a propeptide — activation peptide. The Cysteine switch signature appears at 88–95 (PRCGVPDV). Zn(2+) is bound at residue Cys-90. Asn-118 is a glycosylation site (N-linked (GlcNAc...) asparagine). Ca(2+)-binding residues include Asp-122 and Asp-156. The Zn(2+) site is built by His-166 and Asp-168. Asp-173, Gly-174, Gly-176, and Val-178 together coordinate Ca(2+). His-181 provides a ligand contact to Zn(2+). Ca(2+) contacts are provided by Gly-188, Asn-190, and Asp-192. His-194 is a binding site for Zn(2+). Ca(2+) is bound by residues Asp-196, Asp-197, and Glu-199. A Zn(2+)-binding site is contributed by His-216. The active site involves Glu-217. Zn(2+) contacts are provided by His-220 and His-226. Hemopexin repeat units follow at residues 285–334 (LPMC…WPSL), 335–381 (PSNM…GLPE), 383–431 (VQKI…FPGI), and 432–475 (GTKV…WFNC). Residues Cys-288 and Cys-475 are joined by a disulfide bond. Residue Asp-295 participates in Ca(2+) binding. Ca(2+)-binding residues include Asp-387 and Asp-436.

It belongs to the peptidase M10A family. The cofactor is Ca(2+). Zn(2+) serves as cofactor.

It localises to the secreted. It is found in the extracellular space. The protein resides in the extracellular matrix. The catalysed reaction is Preferential cleavage where P1', P2' and P3' are hydrophobic residues.. Its activity is regulated as follows. Inhibited by a synthetic peptide corresponding to the inhibitory cysteine switch motif. Inhibited by ethylenediaminetetraacetic acid (EDTA), 1,10-pheanthroline, 2-mecaptoethanol, dithiothreitol and metalloproteinase inhibitor protein TIMP. In terms of biological role, can degrade fibronectin, laminin, gelatins of type I, III, IV, and V; collagens III, IV, X, and IX, and cartilage proteoglycans. Activates procollagenase. Functionally, metalloproteinase with a rather broad substrate specificity that can degrade fibronectin, laminin, gelatins of type I, III, IV, and V; collagens III, IV, X, and IX, and cartilage proteoglycans. Activates different molecules including growth factors, plasminogen or other matrix metalloproteinases such as MMP9. Once released into the extracellular matrix (ECM), the inactive pro-enzyme is activated by the plasmin cascade signaling pathway. Also acts intracellularly. For example, in dopaminergic neurons, gets activated by the serine protease HTRA2 upon stress and plays a pivotal role in DA neuronal degeneration by mediating microglial activation and alpha-synuclein/SNCA cleavage. In addition, plays a role in immune response and possesses antiviral activity against various viruses. Mechanistically, translocates from the cytoplasm into the cell nucleus upon virus infection to influence NF-kappa-B activities. The chain is Stromelysin-1 (Mmp3) from Rattus norvegicus (Rat).